A 318-amino-acid polypeptide reads, in one-letter code: Aspartate carbamoyltransferase catalytic subunit (318 aa).

2 residues coordinate carbamoyl phosphate: arginine 55 and threonine 56. Lysine 83 is a binding site for L-aspartate. Residues arginine 105, histidine 138, and glutamine 141 each contribute to the carbamoyl phosphate site. Residues arginine 171 and arginine 225 each contribute to the L-aspartate site. Carbamoyl phosphate contacts are provided by glycine 266 and proline 267.

This sequence belongs to the aspartate/ornithine carbamoyltransferase superfamily. ATCase family. In terms of assembly, heterododecamer (2C3:3R2) of six catalytic PyrB chains organized as two trimers (C3), and six regulatory PyrI chains organized as three dimers (R2).

The catalysed reaction is carbamoyl phosphate + L-aspartate = N-carbamoyl-L-aspartate + phosphate + H(+). The protein operates within pyrimidine metabolism; UMP biosynthesis via de novo pathway; (S)-dihydroorotate from bicarbonate: step 2/3. Functionally, catalyzes the condensation of carbamoyl phosphate and aspartate to form carbamoyl aspartate and inorganic phosphate, the committed step in the de novo pyrimidine nucleotide biosynthesis pathway. In Corynebacterium kroppenstedtii (strain DSM 44385 / JCM 11950 / CIP 105744 / CCUG 35717), this protein is Aspartate carbamoyltransferase catalytic subunit.